The chain runs to 467 residues: A-type ATP synthase subunit B (467 aa).

The tract at residues 95-114 (GKGQPRDHMPLPPPEDFRDV) is disordered.

It belongs to the ATPase alpha/beta chains family. In terms of assembly, has multiple subunits with at least A(3), B(3), C, D, E, F, H, I and proteolipid K(x).

It is found in the cell membrane. Component of the A-type ATP synthase that produces ATP from ADP in the presence of a proton gradient across the membrane. The B chain is a regulatory subunit. The protein is A-type ATP synthase subunit B of Pyrobaculum aerophilum (strain ATCC 51768 / DSM 7523 / JCM 9630 / CIP 104966 / NBRC 100827 / IM2).